A 176-amino-acid chain; its full sequence is Adipose-secreted signaling protein (176 aa).

The tract at residues 1 to 30 is disordered; the sequence is MATAGKGSKGKGTGVRFTPEGTQGHPQEGT. The segment covering 20 to 30 has biased composition (polar residues); that stretch reads EGTQGHPQEGT.

The protein belongs to the ADISSP family.

May be involved in thermogenesis and glucose homeostasis. The protein is Adipose-secreted signaling protein of Taeniopygia guttata (Zebra finch).